Consider the following 332-residue polypeptide: Putative peptide import ATP-binding protein BruAb2_1033 (332 aa).

An ABC transporter domain is found at 11–261 (LEVSNLSVDF…PLHPYTEGLL (251 aa)). 47-54 (GESGSGKS) contributes to the ATP binding site.

This sequence belongs to the ABC transporter superfamily. As to quaternary structure, the complex is composed of two ATP-binding proteins (BruAb2_1033 and BruAb2_1034), two transmembrane proteins (BruAb2_1031 and BruAb2_1032) and a solute-binding protein (BruAb2_1030).

Its subcellular location is the cell inner membrane. Its function is as follows. Probably part of an ABC transporter complex that could be involved in peptide import. Probably responsible for energy coupling to the transport system. The sequence is that of Putative peptide import ATP-binding protein BruAb2_1033 from Brucella abortus biovar 1 (strain 9-941).